Reading from the N-terminus, the 712-residue chain is WD repeat-containing protein 91 (712 aa).

Positions 148 to 180 form a coiled coil; that stretch reads RRTNQVQEENEVLRQKLFALQAEIHRLKKEEQQ. Ser221 carries the phosphoserine modification. A compositionally biased stretch (low complexity) spans 230 to 243; sequence LLPQSKKSPSRLSP. The disordered stretch occupies residues 230–336; it reads LLPQSKKSPS…EAEPCPELHT (107 aa). A phosphoserine mark is found at Ser253 and Ser258. A compositionally biased stretch (basic and acidic residues) spans 297 to 308; that stretch reads RLQDHGKERKEL. WD repeat units lie at residues 371–410, 413–453, 480–520, 525–564, 567–606, 629–667, and 674–712; these read EHHSSIMHCRVDCSGRRVASLDVDGVIKVWSFNPIMQTKA, ISKS…NLCE, AAPS…QQLQ, PEPIAINCTAFNHNGNLLVTGAADGVIRLFDMQQHECAMS, AHYGEVYSVEFSYDENTVYSIGEDGKFIQWNIHKSGLKVS, VQVPRGRLFAFDSEGNYMLTCSATGGVIYKLGGDEKVLE, and GHRAPVVTVDWSTAMDCGTCLTASMDGKIKLTTLLAHKA.

It belongs to the WD repeat WDR91 family. In terms of assembly, interacts with WDR81; involved in early to late endosome cargo transport. Interacts with BECN1; negatively regulates the PI3 kinase/PI3K activity associated with endosomal membranes.

The protein localises to the early endosome membrane. It localises to the late endosome membrane. Its function is as follows. Functions as a negative regulator of the PI3 kinase/PI3K activity associated with endosomal membranes via BECN1, a core subunit of the PI3K complex. By modifying the phosphatidylinositol 3-phosphate/PtdInsP3 content of endosomal membranes may regulate endosome fusion, recycling, sorting and early to late endosome transport. It is for instance, required for the delivery of cargos like BST2/tetherin from early to late endosome and thereby participates indirectly to their degradation by the lysosome. May play a role in meiosis. In Pongo abelii (Sumatran orangutan), this protein is WD repeat-containing protein 91.